A 240-amino-acid chain; its full sequence is MSTEPEASAQPLPAQQSAALFRLMTWLSPAFPVGAFSYSSGIEWAVEAGDVEGAASLRDWLDAMLQHGAGFCDAVLLCHAYRATERHDDAGLLAVAELAAALVTSAERQLETLSQGRAFIEIARKAWNSDGLGRAVAACGEAIAYPVAVGVVSASHGVPLPATLHGFLHAVTSNWISAGARLIPLGQTDSQRVLAALEPSVIATGTRALTASLDDLGTATFRADLASLRHETQYTRLFRS.

Belongs to the UreF family. In terms of assembly, ureD, UreF and UreG form a complex that acts as a GTP-hydrolysis-dependent molecular chaperone, activating the urease apoprotein by helping to assemble the nickel containing metallocenter of UreC. The UreE protein probably delivers the nickel.

It is found in the cytoplasm. Its function is as follows. Required for maturation of urease via the functional incorporation of the urease nickel metallocenter. The polypeptide is Urease accessory protein UreF (Rhodopseudomonas palustris (strain TIE-1)).